The chain runs to 186 residues: Peptidyl-tRNA hydrolase (186 aa).

Tyr-13 lines the tRNA pocket. His-18 functions as the Proton acceptor in the catalytic mechanism. Positions 59, 61, and 107 each coordinate tRNA.

It belongs to the PTH family. As to quaternary structure, monomer.

Its subcellular location is the cytoplasm. The catalysed reaction is an N-acyl-L-alpha-aminoacyl-tRNA + H2O = an N-acyl-L-amino acid + a tRNA + H(+). In terms of biological role, hydrolyzes ribosome-free peptidyl-tRNAs (with 1 or more amino acids incorporated), which drop off the ribosome during protein synthesis, or as a result of ribosome stalling. Catalyzes the release of premature peptidyl moieties from peptidyl-tRNA molecules trapped in stalled 50S ribosomal subunits, and thus maintains levels of free tRNAs and 50S ribosomes. The protein is Peptidyl-tRNA hydrolase of Thermotoga maritima (strain ATCC 43589 / DSM 3109 / JCM 10099 / NBRC 100826 / MSB8).